Reading from the N-terminus, the 296-residue chain is Probable cell wall protein PGA41 (296 aa).

The N-terminal stretch at 1 to 18 is a signal peptide; it reads MKFTIVLFTLISVTVAAA. Over residues 146–212 the composition is skewed to low complexity; the sequence is IASSTKESSS…ITTISSDSST (67 aa). The disordered stretch occupies residues 146-276; it reads IASSTKESSS…PNSSQTAPGA (131 aa). Residues 220–245 are compositionally biased toward gly residues; it reads QGGGGNSGNNGSNGDGGNDASGGGGV. Asn-229 and Asn-268 each carry an N-linked (GlcNAc...) asparagine glycan. Residues 247 to 274 are compositionally biased toward low complexity; the sequence is NENEQASSPPSSQSSTNSNQPNSSQTAP. The GPI-anchor amidated glycine moiety is linked to residue Gly-275. The propeptide at 276–296 is removed in mature form; the sequence is AANYLSSVSVGTLMILVLGLI.

It belongs to the IHD1 family. The GPI-anchor is attached to the protein in the endoplasmic reticulum and serves to target the protein to the cell surface. There, the glucosamine-inositol phospholipid moiety is cleaved off and the GPI-modified mannoprotein is covalently attached via its lipidless GPI glycan remnant to the 1,6-beta-glucan of the outer cell wall layer.

Its subcellular location is the secreted. The protein localises to the cell wall. The protein resides in the membrane. Functionally, probable GPI-anchored cell wall protein that may be involved in cell wall organization, hyphal growth, as well as in virulence. The polypeptide is Probable cell wall protein PGA41 (PGA41) (Candida albicans (strain SC5314 / ATCC MYA-2876) (Yeast)).